Reading from the N-terminus, the 427-residue chain is Interleukin-13 receptor subunit alpha-1 (427 aa).

Positions 1–21 are cleaved as a signal peptide; the sequence is MEWPARLCGLWALLLCAGGGG. Topologically, residues 22–343 are extracellular; sequence GGGGAAPTET…MSIGKKRNST (322 aa). Fibronectin type-III domains follow at residues 34 to 123, 128 to 226, and 227 to 339; these read PVTN…PPEG, AVTE…TSRV, and KPDP…IGKK. Residues Asn37 and Asn61 are each glycosylated (N-linked (GlcNAc...) asparagine). Disulfide bonds link Cys62–Cys102, Cys95–Cys117, and Cys134–Cys144. N-linked (GlcNAc...) asparagine glycans are attached at residues Asn105, Asn138, and Asn157. Cys173 and Cys185 are joined by a disulfide. 5 N-linked (GlcNAc...) asparagine glycosylation sites follow: Asn235, Asn265, Asn293, Asn329, and Asn341. Cystine bridges form between Cys257–Cys320 and Cys282–Cys296. Residues 327-331 carry the WSXWS motif motif; that stretch reads WSNWS. The chain crosses the membrane as a helical span at residues 344–367; the sequence is LYITMLLIVPVIVAGAIIVLLLYL. Over 368–427 the chain is Cytoplasmic; that stretch reads KRLKIIIFPPIPDPGKIFKEMFGDQNDDTLHWKKYDIYEKQTKEETDSVVLIENLKKASQ. The short motif at 374 to 382 is the Box 1 motif element; the sequence is IFPPIPDPG.

It belongs to the type I cytokine receptor family. Type 5 subfamily. Interleukin-13 receptor is a complex of IL4R, IL13RA1, and possibly other components. Interacts with TRAF3IP1. Interacts with IL4. In terms of tissue distribution, ubiquitous. Highest levels in heart, liver, skeletal muscle and ovary; lowest levels in brain, lung and kidney. Also found in B-cells, T-cells and endothelial cells.

The protein resides in the membrane. Its function is as follows. Binds with low affinity to interleukin-13 (IL13). Together with IL4RA can form a functional receptor for IL13. Also serves as an alternate accessory protein to the common cytokine receptor gamma chain for interleukin-4 (IL4) signaling, but cannot replace the function of IL2RG in allowing enhanced interleukin-2 (IL2) binding activity. The protein is Interleukin-13 receptor subunit alpha-1 (IL13RA1) of Homo sapiens (Human).